The chain runs to 760 residues: General transcription and DNA repair factor IIH helicase subunit XPD (760 aa).

In terms of domain architecture, Helicase ATP-binding spans 7–283 (GLLVYFPYDY…KETDEQRLRE (277 aa)). 42 to 49 (MPSGTGKT) is an ATP binding site. [4Fe-4S] cluster-binding residues include C116, C134, C155, and C190. A DEAH box motif is present at residues 234–237 (DEAH). Residues 438–637 (MDASLAIKPV…TQSRILKARL (200 aa)) form a mediates interaction with MMS19 region. Residues 682-695 (KRFARADKRGKLPR) carry the Nuclear localization signal motif.

Belongs to the helicase family. RAD3/XPD subfamily. In terms of assembly, component of the 7-subunit TFIIH core complex composed of XPB/ERCC3, XPD/ERCC2, GTF2H1, GTF2H2, GTF2H3, GTF2H4 and GTF2H5, which is active in NER. The core complex associates with the 3-subunit CDK-activating kinase (CAK) module composed of CCNH/cyclin H, CDK7 and MNAT1 to form the 10-subunit holoenzyme (holo-TFIIH) active in transcription. The interaction with GTF2H2 results in the stimulation of the 5'--&gt;3' helicase activity. Component of the MMXD complex, which includes CIAO1, ERCC2, CIAO2B, MMS19 and SLC25A5. Interacts with CIAO1 and CIAO2B; the interaction WITH CIAO2B is direct. Interacts with ATF7IP. Interacts directly with MMS19. Part of TBP-based Pol II pre-initiation complex (PIC), in which Pol II core assembles with general transcription factors and other specific initiation factors including GTF2E1, GTF2E2, GTF2F1, GTF2F2, TCEA1, ERCC2, ERCC3, GTF2H2, GTF2H3, GTF2H4, GTF2H5, GTF2A1, GTF2A2, GTF2B and TBP; this large multi-subunit PIC complex mediates DNA unwinding and targets Pol II core to the transcription start site where the first phosphodiester bond forms. Mg(2+) is required as a cofactor. [4Fe-4S] cluster serves as cofactor. Post-translationally, ISGylated.

It localises to the nucleus. Its subcellular location is the cytoplasm. The protein resides in the cytoskeleton. The protein localises to the spindle. The catalysed reaction is Couples ATP hydrolysis with the unwinding of duplex DNA at the replication fork by translocating in the 5'-3' direction. This creates two antiparallel DNA single strands (ssDNA). The leading ssDNA polymer is the template for DNA polymerase III holoenzyme which synthesizes a continuous strand.. The enzyme catalyses ATP + H2O = ADP + phosphate + H(+). Its function is as follows. ATP-dependent 5'-3' DNA helicase, component of the general transcription and DNA repair factor IIH (TFIIH) core complex, which is involved in general and transcription-coupled nucleotide excision repair (NER) of damaged DNA and, when complexed to CDK-activating kinase (CAK), involved in transcription by RNA polymerase II. In NER, TFIIH acts by opening DNA around the lesion to allow the excision of the damaged oligonucleotide and its replacement by a new DNA fragment. The ATP-dependent helicase activity of XPD/ERCC2 is required for DNA opening. In transcription, TFIIH has an essential role in transcription initiation. When the pre-initiation complex (PIC) has been established, TFIIH is required for promoter opening and promoter escape. Phosphorylation of the C-terminal tail (CTD) of the largest subunit of RNA polymerase II by the kinase module CAK controls the initiation of transcription. XPD/ERCC2 acts by forming a bridge between CAK and the core-TFIIH complex. Involved in the regulation of vitamin-D receptor activity. As part of the mitotic spindle-associated MMXD complex it plays a role in chromosome segregation. Might have a role in aging process and could play a causative role in the generation of skin cancers. This chain is General transcription and DNA repair factor IIH helicase subunit XPD (ERCC2), found in Bos taurus (Bovine).